A 1357-amino-acid polypeptide reads, in one-letter code: DNA-directed RNA polymerase subunit beta (1357 aa).

It belongs to the RNA polymerase beta chain family. The RNAP catalytic core consists of 2 alpha, 1 beta, 1 beta' and 1 omega subunit. When a sigma factor is associated with the core the holoenzyme is formed, which can initiate transcription.

It catalyses the reaction RNA(n) + a ribonucleoside 5'-triphosphate = RNA(n+1) + diphosphate. In terms of biological role, DNA-dependent RNA polymerase catalyzes the transcription of DNA into RNA using the four ribonucleoside triphosphates as substrates. This chain is DNA-directed RNA polymerase subunit beta, found in Pseudomonas fluorescens (strain ATCC BAA-477 / NRRL B-23932 / Pf-5).